The primary structure comprises 824 residues: Translation initiation factor IF-2 (824 aa).

Positions 1–234 (MSDQDGKKPL…RQKAMGGSVD (234 aa)) are disordered. Basic and acidic residues-rich tracts occupy residues 59-75 (GGKRDKSVPDAEMDRRL) and 82-144 (KARE…RRNA). Positions 145 to 159 (PPEAAAPAVDPAAAA) are enriched in low complexity. Basic and acidic residues predominate over residues 170–186 (ARREPERDNKRENRSRG). The 171-residue stretch at 321–491 (PRPPVITIMG…ALQAELLELK (171 aa)) folds into the tr-type G domain. Residues 330-337 (GHVDHGKT) form a G1 region. Residue 330 to 337 (GHVDHGKT) coordinates GTP. Positions 355–359 (GITQH) are G2. The G3 stretch occupies residues 377-380 (DTPG). Residues 377–381 (DTPGH) and 431–434 (NKID) each bind GTP. The tract at residues 431-434 (NKID) is G4. Positions 467–469 (SAM) are G5.

Belongs to the TRAFAC class translation factor GTPase superfamily. Classic translation factor GTPase family. IF-2 subfamily.

It localises to the cytoplasm. Its function is as follows. One of the essential components for the initiation of protein synthesis. Protects formylmethionyl-tRNA from spontaneous hydrolysis and promotes its binding to the 30S ribosomal subunits. Also involved in the hydrolysis of GTP during the formation of the 70S ribosomal complex. The chain is Translation initiation factor IF-2 from Jannaschia sp. (strain CCS1).